Here is a 465-residue protein sequence, read N- to C-terminus: MKIVVSRGLDLSLKGAPKESGFCGKVDPTYVSVDLRPFAPLPLGVKVTPEDQVTAGSPLAEYKLFSGVFITSPVDGEVVEIRRGNKRALLEIVIKKKPGISQTKFSYDLQSLTQKDLLEVFKKEGLFALFKQRPFDIPALPTQSPRDVFINLADNRPFTPSVEKHLSLFSSKEDGYYIFVVGVQAIAKLFGLKPHIISTDRLTLPTQDLVSIAHLHTIDGPFPSGSPSTHIHHIARIRNERDVVFTISFQEVLSIGHLFLKGFVLGQQIVALAGSALPPSQRKYLITAKGASFSDLLPKDIFSSDEITLISGDPLTGRLCKKEENPCLGMRDHTITLLPNPKTRESFSFLRLGWNKLTVTRTYLSGFFKRKRVFMDMDTNMHGEKRPIIDAEIYERVSAIPVPVALIIKALETQNFEEACRLGLLEVAPEDFALPTFIDPSKTEMFSIVKESLLRYAKENVVTSS.

The protein belongs to the NqrA family. Composed of six subunits; NqrA, NqrB, NqrC, NqrD, NqrE and NqrF.

The enzyme catalyses a ubiquinone + n Na(+)(in) + NADH + H(+) = a ubiquinol + n Na(+)(out) + NAD(+). In terms of biological role, NQR complex catalyzes the reduction of ubiquinone-1 to ubiquinol by two successive reactions, coupled with the transport of Na(+) ions from the cytoplasm to the periplasm. NqrA to NqrE are probably involved in the second step, the conversion of ubisemiquinone to ubiquinol. The sequence is that of Na(+)-translocating NADH-quinone reductase subunit A from Chlamydia trachomatis serovar A (strain ATCC VR-571B / DSM 19440 / HAR-13).